A 427-amino-acid polypeptide reads, in one-letter code: Trigger factor (427 aa).

The PPIase FKBP-type domain maps to 163-248; it reads GDTVVIDFVG…IHEVKAKEVP (86 aa).

This sequence belongs to the FKBP-type PPIase family. Tig subfamily.

The protein localises to the cytoplasm. It carries out the reaction [protein]-peptidylproline (omega=180) = [protein]-peptidylproline (omega=0). Involved in protein export. Acts as a chaperone by maintaining the newly synthesized protein in an open conformation. Functions as a peptidyl-prolyl cis-trans isomerase. This chain is Trigger factor, found in Streptococcus suis (strain 98HAH33).